A 327-amino-acid chain; its full sequence is Microtubule-associated protein RP/EB family member 2 (327 aa).

The tract at residues 1 to 21 is disordered; the sequence is MPGPTQTLSPNGENNNDIIQD. Serine 9 is modified (phosphoserine). One can recognise a Calponin-homology (CH) domain in the interval 57–159; sequence TMSRHDIIAW…FIQWFKKFYD (103 aa). Tyrosine 167 carries the post-translational modification Phosphotyrosine. Disordered regions lie at residues 171–240 and 299–327; these read EARQ…DKDL and ASEEHEGHTEEPEAEEQAHEQQPPQQEEY. The tract at residues 187-327 is DCTN1-binding; that stretch reads QIFNLPKKSH…EQQPPQQEEY (141 aa). The span at 200 to 234 shows a compositional bias: low complexity; the sequence is SPTAGAAKSSPAAKPGSTPSRPSSAKRASSSGSAS. Serine 219 carries the phosphoserine modification. An EB1 C-terminal domain is found at 236-306; sequence SDKDLETQVI…LYASEEHEGH (71 aa). The tract at residues 259–302 is APC-binding; it reads EGVEKERDFYFGKLREIELLCQEHGQENDDLVQRLMDVLYASEE. The segment covering 300-317 has biased composition (basic and acidic residues); the sequence is SEEHEGHTEEPEAEEQAH. Residues 318–327 show a composition bias toward low complexity; it reads EQQPPQQEEY.

It belongs to the MAPRE family. Interacts with DCTN1. Interacts with APC (via C-terminal). Interacts with monomeric and polymerized tubulin. Interacts with SLAIN1. Interacts (via the N-terminal region) with BAG1.

The protein localises to the cytoplasm. It is found in the cytoskeleton. Its function is as follows. May be involved in microtubule polymerization, and spindle function by stabilizing microtubules and anchoring them at centrosomes. May play a role in cell migration. This Pongo abelii (Sumatran orangutan) protein is Microtubule-associated protein RP/EB family member 2 (MAPRE2).